The following is a 305-amino-acid chain: MIHCGICGKAKTADVQFICCHCINGSPAVLLRDKMNLLILRQEVEQLKTAVEDQLETGFAGEGQLGRQLQKLDIYNEKRRLIKLRQRLQLARNKVQLKRNKYNELLQIMSTNGYLEESTSATDSIDLEEQAAEESASLDTLSHILARNQKQLFAELCRWFRIRKSDEDDVFSYTIWGLPMVNLKNGSELDPSIMVSSMRYLQQYLQLAFRIWLFKAICDKPIENDRNIIENFTQLIYDTLDILRARKLVSKSVSIRDILIRYDLDGMIYHLSQNKYLSSLDDASNSYPPTMQNIKQLVMSMIPSI.

A coiled-coil region spans residues Lys34 to Arg147.

This sequence belongs to the ATG14 family. Component of the autophagy-specific VPS34 PI3-kinase complex I.

Its subcellular location is the preautophagosomal structure membrane. It localises to the vacuole membrane. Functionally, required for cytoplasm to vacuole transport (Cvt) and autophagy as a part of the autophagy-specific VPS34 PI3-kinase complex I. This complex is essential to recruit the ATG8-phosphatidylinositol conjugate and the ATG12-ATG5 conjugate to the pre-autophagosomal structure. ATG14 mediates the specific binding of the VPS34 PI3-kinase complex I to the preautophagosomal structure (PAS). This Kluyveromyces marxianus (strain DMKU3-1042 / BCC 29191 / NBRC 104275) (Yeast) protein is Autophagy-related protein 14.